A 276-amino-acid chain; its full sequence is ADP-dependent (S)-NAD(P)H-hydrate dehydratase (276 aa).

The region spanning 7–275 is the YjeF C-terminal domain; the sequence is TEEHVRATLP…DILPRVWKRF (269 aa). Ala-42, Gly-104, and His-149 together coordinate (6S)-NADPHX. AMP contacts are provided by residues 186 to 190 and Gly-215; that span reads KGNQT. Position 216 (Asp-216) interacts with (6S)-NADPHX.

Belongs to the NnrD/CARKD family. Homotetramer. It depends on Mg(2+) as a cofactor.

It carries out the reaction (6S)-NADHX + ADP = AMP + phosphate + NADH + H(+). The enzyme catalyses (6S)-NADPHX + ADP = AMP + phosphate + NADPH + H(+). In terms of biological role, catalyzes the dehydration of the S-form of NAD(P)HX at the expense of ADP, which is converted to AMP. Together with NAD(P)HX epimerase, which catalyzes the epimerization of the S- and R-forms, the enzyme allows the repair of both epimers of NAD(P)HX, a damaged form of NAD(P)H that is a result of enzymatic or heat-dependent hydration. In Bacillus subtilis (strain 168), this protein is ADP-dependent (S)-NAD(P)H-hydrate dehydratase.